A 233-amino-acid polypeptide reads, in one-letter code: Ribonuclease 3 (233 aa).

An RNase III domain is found at 7 to 136 (KQYLLSEFNI…FIGALYLDQG (130 aa)). Mg(2+) is bound at residue Glu49. Asp53 is a catalytic residue. Mg(2+) is bound by residues Asp122 and Glu125. Residue Glu125 is part of the active site. A DRBM domain is found at 162–232 (DFKSRLQEKL…ARAALKLLEE (71 aa)).

It belongs to the ribonuclease III family. Homodimer. It depends on Mg(2+) as a cofactor.

The protein localises to the cytoplasm. The enzyme catalyses Endonucleolytic cleavage to 5'-phosphomonoester.. Digests double-stranded RNA. Involved in the processing of primary rRNA transcript to yield the immediate precursors to the large and small rRNAs (23S and 16S). Processes some mRNAs, and tRNAs when they are encoded in the rRNA operon. Processes pre-crRNA and tracrRNA of type II CRISPR loci if present in the organism. This Leuconostoc citreum (strain KM20) protein is Ribonuclease 3.